Consider the following 265-residue polypeptide: uncharacterized protein (265 aa).

2 consecutive CBS domains span residues 9–64 (MTKK…EKVE) and 67–126 (MTKR…TTPK).

This is an uncharacterized protein from Methanocaldococcus jannaschii (strain ATCC 43067 / DSM 2661 / JAL-1 / JCM 10045 / NBRC 100440) (Methanococcus jannaschii).